The chain runs to 277 residues: Carbonyl reductase [NADPH] 1 (277 aa).

NADP(+)-binding positions include 10–34 (VTGS…GEVV), 63–64 (DI), and asparagine 90. A Phosphoserine modification is found at serine 30. Glutathione-binding positions include 95-97 (FKV) and glutamine 106. Serine 140 is a substrate binding site. 193 to 194 (AY) is a binding site for glutathione. Tyrosine 194 acts as the Proton acceptor in catalysis. Residues 194 to 198 (YGVTK) and 231 to 233 (VRT) each bind NADP(+).

This sequence belongs to the short-chain dehydrogenases/reductases (SDR) family. In terms of assembly, monomer.

It is found in the cytoplasm. It catalyses the reaction a secondary alcohol + NADP(+) = a ketone + NADPH + H(+). The enzyme catalyses prostaglandin F2alpha + NADP(+) = prostaglandin E2 + NADPH + H(+). It carries out the reaction prostaglandin E1 + NADP(+) = 15-oxoprostaglandin E1 + NADPH + H(+). The catalysed reaction is prostaglandin D2 + NADP(+) = 15-oxoprostaglandin D2 + NADPH + H(+). It catalyses the reaction menadione + NADPH + H(+) = menadiol + NADP(+). The enzyme catalyses prostaglandin E2 + NADP(+) = 15-oxoprostaglandin E2 + NADPH + H(+). It carries out the reaction prostaglandin F2alpha + NADP(+) = 15-oxoprostaglandin F2alpha + NADPH + H(+). The catalysed reaction is daunorubicin + NADPH + H(+) = 13-dihydrodaunorubicin + NADP(+). It catalyses the reaction S-nitrosoglutathione + NADPH + H(+) = S-(hydroxysulfenamide)glutathione + NADP(+). The enzyme catalyses a primary alcohol + NADP(+) = an aldehyde + NADPH + H(+). It carries out the reaction cortisol + NADPH + H(+) = 20beta-dihydrocortisol + NADP(+). The catalysed reaction is corticosterone + NADPH + H(+) = 20beta-dihydrocorticosterone + NADP(+). In terms of biological role, NADPH-dependent reductase with broad substrate specificity. Catalyzes the reduction of a wide variety of carbonyl compounds including quinones, prostaglandins, menadione, plus various xenobiotics. Catalyzes the reduction of the antitumor anthracyclines doxorubicin and daunorubicin to the cardiotoxic compounds doxorubicinol and daunorubicinol. Can convert prostaglandin E to prostaglandin F2-alpha. Can bind glutathione, which explains its higher affinity for glutathione-conjugated substrates. Catalyzes the reduction of S-nitrosoglutathione. In addition, participates in the glucocorticoid metabolism by catalyzing the NADPH-dependent cortisol/corticosterone into 20beta-dihydrocortisol (20b-DHF) or 20beta-corticosterone (20b-DHB), which are weak agonists of NR3C1 and NR3C2 in adipose tissue. This chain is Carbonyl reductase [NADPH] 1, found in Macaca fascicularis (Crab-eating macaque).